Here is a 239-residue protein sequence, read N- to C-terminus: Small ribosomal subunit protein eS1 (239 aa).

Positions 1–24 (MAIQPPGSYPQGNKKGKAKKKSGQ) are disordered.

It belongs to the eukaryotic ribosomal protein eS1 family. In terms of assembly, component of the small ribosomal subunit. Mature ribosomes consist of a small (40S) and a large (60S) subunit. The 40S subunit contains about 33 different proteins and 1 molecule of RNA (18S). The 60S subunit contains about 49 different proteins and 3 molecules of RNA (25S, 5.8S and 5S).

The protein resides in the cytoplasm. The chain is Small ribosomal subunit protein eS1 from Encephalitozoon cuniculi (strain GB-M1) (Microsporidian parasite).